The chain runs to 229 residues: Flagellar L-ring protein (229 aa).

Positions 1–23 (MLSRLGARVLYCLAGLALLASGG) are cleaved as a signal peptide. The N-palmitoyl cysteine moiety is linked to residue Cys24. Residue Cys24 is the site of S-diacylglycerol cysteine attachment.

It belongs to the FlgH family. The basal body constitutes a major portion of the flagellar organelle and consists of four rings (L,P,S, and M) mounted on a central rod.

It is found in the cell outer membrane. Its subcellular location is the bacterial flagellum basal body. Its function is as follows. Assembles around the rod to form the L-ring and probably protects the motor/basal body from shearing forces during rotation. This chain is Flagellar L-ring protein, found in Cupriavidus pinatubonensis (strain JMP 134 / LMG 1197) (Cupriavidus necator (strain JMP 134)).